We begin with the raw amino-acid sequence, 383 residues long: MASCERSLLPIDIIEEICCRIPVEYLTQFKLTCKQWFALLKDKRFIYKYLDLFQEQERFIRIDRIVQIIDPVKGARSSSPIPQEFDNVAQISTMVHCDGLLLCRCKNERSRSYKLAVWNPFLSRVKWIEPMDFYSSNDFYGFGYDNVCRDEYKLLRIFDGEIEDESEIAGSYEPKIQIYDFKSDSWRIVDDTRLDWSIDPPCKGVSVKGNMYWIAHWNNRPEIFIQSFDFSTETFKIVCNLPFECNVLDTAALSSLRGDRLSLLHQSGETMKIEVWITNKLSDEVVSWTKYVDVTSPDLPTLHTDQHLTHPSYFIDKNDNIMVWCEQETEEETDDDVCVSVCMISKDGIVKKQIDAGRCDLCSDNRPFVCGYAYVPSLVPVPE.

The 48-residue stretch at 3–50 (SCERSLLPIDIIEEICCRIPVEYLTQFKLTCKQWFALLKDKRFIYKYL) folds into the F-box domain.

The protein is Putative F-box protein At3g22650 of Arabidopsis thaliana (Mouse-ear cress).